The primary structure comprises 288 residues: uncharacterized protein (288 aa).

The 182-residue stretch at 107–288 (KQIPTLIGPQ…LAIQLLASIA (182 aa)) folds into the ATP-grasp domain. Residues Lys-145 and 178–188 (QQYIATSNSEA) each bind ATP. The Mg(2+) site is built by Asp-248, Glu-261, and Asn-263. The Mn(2+) site is built by Asp-248, Glu-261, and Asn-263.

It belongs to the RimK family.

This is an uncharacterized protein from Mycoplasma pneumoniae (strain ATCC 29342 / M129 / Subtype 1) (Mycoplasmoides pneumoniae).